A 371-amino-acid polypeptide reads, in one-letter code: Monomethylxanthine methyltransferase 2 (371 aa).

Tyr18, Cys61, Asn66, Asp100, Leu101, Ser139, Phe140, and Cys156 together coordinate S-adenosyl-L-homocysteine. 3 residues coordinate theobromine: Tyr157, His160, and Trp161. 4 residues coordinate Mg(2+): Asn178, Asp260, Phe262, and Asn263. A theobromine-binding site is contributed by Tyr355.

This sequence belongs to the methyltransferase superfamily. Type-7 methyltransferase family. The cofactor is Mg(2+).

It catalyses the reaction 7-methylxanthine + S-adenosyl-L-methionine = theobromine + S-adenosyl-L-homocysteine + H(+). Its pathway is alkaloid biosynthesis. Functionally, involved in the biosynthesis of caffeine. Catalyzes the conversion of 7-methylxanthine (7mX) to theobromine and with a lower activity of paraxanthine to caffeine. This Coffea canephora (Robusta coffee) protein is Monomethylxanthine methyltransferase 2.